Reading from the N-terminus, the 486-residue chain is Malonate-semialdehyde dehydrogenase 1 (486 aa).

NAD(+)-binding residues include phenylalanine 154, lysine 178, glutamate 181, arginine 182, and serine 231. The Nucleophile role is filled by cysteine 286. Residue glutamate 386 participates in NAD(+) binding.

This sequence belongs to the aldehyde dehydrogenase family. IolA subfamily. As to quaternary structure, homotetramer.

It catalyses the reaction 3-oxopropanoate + NAD(+) + CoA + H2O = hydrogencarbonate + acetyl-CoA + NADH + H(+). The enzyme catalyses 2-methyl-3-oxopropanoate + NAD(+) + CoA + H2O = propanoyl-CoA + hydrogencarbonate + NADH + H(+). Its pathway is polyol metabolism; myo-inositol degradation into acetyl-CoA; acetyl-CoA from myo-inositol: step 7/7. In terms of biological role, catalyzes the oxidation of malonate semialdehyde (MSA) and methylmalonate semialdehyde (MMSA) into acetyl-CoA and propanoyl-CoA, respectively. Is involved in a myo-inositol catabolic pathway. Bicarbonate, and not CO2, is the end-product of the enzymatic reaction. The sequence is that of Malonate-semialdehyde dehydrogenase 1 from Oceanobacillus iheyensis (strain DSM 14371 / CIP 107618 / JCM 11309 / KCTC 3954 / HTE831).